Here is a 236-residue protein sequence, read N- to C-terminus: Ureidoacrylate amidohydrolase RutB (236 aa).

Residue D24 is the Proton acceptor of the active site. K133 is a catalytic residue. The active-site Nucleophile is the C166.

It belongs to the isochorismatase family. RutB subfamily.

It carries out the reaction (Z)-3-ureidoacrylate + H2O + H(+) = (Z)-3-aminoacrylate + NH4(+) + CO2. The catalysed reaction is (Z)-3-ureidoacrylate + H2O = (Z)-3-aminoacrylate + carbamate + H(+). The enzyme catalyses (Z)-2-methylureidoacrylate + H2O + H(+) = (Z)-2-methylaminoacrylate + NH4(+) + CO2. Functionally, hydrolyzes ureidoacrylate to form aminoacrylate and carbamate. The carbamate hydrolyzes spontaneously, thereby releasing one of the nitrogen atoms of the pyrimidine ring as ammonia and one of its carbon atoms as CO2. The polypeptide is Ureidoacrylate amidohydrolase RutB (Klebsiella variicola (strain At-22)).